Here is an 84-residue protein sequence, read N- to C-terminus: LSCASCENAACPAIGLPCKPSEYVYTPCGCCPQCPLELGQPCGSFTQRCQFDLWCLRRKGNKIEAYKYVPWHLDFKGVCARVDV.

An IGFBP N-terminal domain is found at 1–82 (LSCASCENAA…LDFKGVCARV (82 aa)). 6 disulfides stabilise this stretch: C3-C28, C6-C30, C11-C31, C18-C34, C42-C55, and C49-C79.

As to expression, shell.

Binds human IGF1 and IGF2 and bovine insulin. In Haliotis laevigata (Smooth Australian abalone), this protein is Perlustrin.